A 97-amino-acid polypeptide reads, in one-letter code: MIGKQATLRDIVLEELVQPIDLHCHEELTEEVEEAVVEEEPEYTPYKIIVVCGGCETQLKLYVLATDFGIRSFQASLLENVKLVCPACREDIRNGRR.

Residues 1–40 (MIGKQATLRDIVLEELVQPIDLHCHEELTEEVEEAVVEEE) form an E7 terminal domain region. The LXCXE motif; interaction with host RB1 and TMEM173/STING motif lies at 22 to 26 (LHCHE). Residues 52 to 88 (CGGCETQLKLYVLATDFGIRSFQASLLENVKLVCPAC) fold into a zinc finger. Residues 70-78 (IRSFQASLL) carry the Nuclear export signal motif.

It belongs to the papillomaviridae E7 protein family. In terms of assembly, homodimer. Homooligomer. Interacts with host RB1; this interaction induces dissociation of RB1-E2F1 complex thereby disrupting RB1 activity. Interacts with host EP300; this interaction represses EP300 transcriptional activity. Interacts with protein E2; this interaction inhibits E7 oncogenic activity. Interacts with host TMEM173/STING; this interaction impairs the ability of TMEM173/STING to sense cytosolic DNA and promote the production of type I interferon (IFN-alpha and IFN-beta). In terms of processing, highly phosphorylated.

It localises to the host cytoplasm. The protein resides in the host nucleus. Plays a role in viral genome replication by driving entry of quiescent cells into the cell cycle. Stimulation of progression from G1 to S phase allows the virus to efficiently use the cellular DNA replicating machinery to achieve viral genome replication. E7 protein has both transforming and trans-activating activities. Induces the disassembly of the E2F1 transcription factor from RB1, with subsequent transcriptional activation of E2F1-regulated S-phase genes. Interferes with host histone deacetylation mediated by HDAC1 and HDAC2, leading to transcription activation. Also plays a role in the inhibition of both antiviral and antiproliferative functions of host interferon alpha. Interaction with host TMEM173/STING impairs the ability of TMEM173/STING to sense cytosolic DNA and promote the production of type I interferon (IFN-alpha and IFN-beta). This chain is Protein E7, found in Human papillomavirus 23.